We begin with the raw amino-acid sequence, 1242 residues long: ATP-dependent helicase/nuclease subunit A (1242 aa).

The 476-residue stretch at 12–487 (SRWTDEQWKA…IDLASNFRSR (476 aa)) folds into the UvrD-like helicase ATP-binding domain. 33-40 (AAAGSGKT) lines the ATP pocket. Positions 514 to 808 (AAQLKYGADY…RVMTIHSSKG (295 aa)) constitute a UvrD-like helicase C-terminal domain.

It belongs to the helicase family. AddA subfamily. In terms of assembly, heterodimer of AddA and AddB/RexB. Requires Mg(2+) as cofactor.

It carries out the reaction Couples ATP hydrolysis with the unwinding of duplex DNA by translocating in the 3'-5' direction.. It catalyses the reaction ATP + H2O = ADP + phosphate + H(+). Functionally, the heterodimer acts as both an ATP-dependent DNA helicase and an ATP-dependent, dual-direction single-stranded exonuclease. Recognizes the chi site generating a DNA molecule suitable for the initiation of homologous recombination. The AddA nuclease domain is required for chi fragment generation; this subunit has the helicase and 3' -&gt; 5' nuclease activities. This is ATP-dependent helicase/nuclease subunit A from Geobacillus thermodenitrificans (strain NG80-2).